The chain runs to 324 residues: Putative transport protein TM_1187 (324 aa).

The next 8 helical transmembrane spans lie at 12-32, 62-82, 105-125, 131-151, 190-210, 227-247, 252-272, and 285-305; these read LYLVLFLVLAKLSPFIITALI, ISNVLVFLTIAYSAVNFFPVI, IPGWLSSILSSISASFSEGAL, IVGYVPSFITAAILIVITAFI, GGQVLVAIFVGLFVGFGAFIF, FVPYLGVVISAIPLLMLAFSV, GLLIGTIILVAANQLEMWVLA, and FIILIMILILGDLFSFGGVLI.

The protein belongs to the autoinducer-2 exporter (AI-2E) (TC 2.A.86) family.

Its subcellular location is the cell membrane. This Thermotoga maritima (strain ATCC 43589 / DSM 3109 / JCM 10099 / NBRC 100826 / MSB8) protein is Putative transport protein TM_1187.